A 213-amino-acid polypeptide reads, in one-letter code: LexA repressor (213 aa).

Positions 29-49 form a DNA-binding region, H-T-H motif; the sequence is RAEIAQALGFRSPNAAEDHLK. Active-site for autocatalytic cleavage activity residues include serine 131 and lysine 168.

This sequence belongs to the peptidase S24 family. As to quaternary structure, homodimer.

It catalyses the reaction Hydrolysis of Ala-|-Gly bond in repressor LexA.. Functionally, represses a number of genes involved in the response to DNA damage (SOS response), including recA and lexA. In the presence of single-stranded DNA, RecA interacts with LexA causing an autocatalytic cleavage which disrupts the DNA-binding part of LexA, leading to derepression of the SOS regulon and eventually DNA repair. The polypeptide is LexA repressor (Bordetella avium (strain 197N)).